The following is a 344-amino-acid chain: Succinylglutamate desuccinylase (344 aa).

Zn(2+)-binding residues include H63, E66, and H160. The active site involves E224.

Belongs to the AspA/AstE family. Succinylglutamate desuccinylase subfamily. It depends on Zn(2+) as a cofactor.

It catalyses the reaction N-succinyl-L-glutamate + H2O = L-glutamate + succinate. Its pathway is amino-acid degradation; L-arginine degradation via AST pathway; L-glutamate and succinate from L-arginine: step 5/5. In terms of biological role, transforms N(2)-succinylglutamate into succinate and glutamate. The polypeptide is Succinylglutamate desuccinylase (Shewanella sp. (strain MR-4)).